The primary structure comprises 313 residues: Beta-ribofuranosylphenol 5'-phosphate synthase (313 aa).

It belongs to the beta-RFA-P synthase family. In terms of assembly, homodimer.

It carries out the reaction 5-phospho-alpha-D-ribose 1-diphosphate + 4-hydroxybenzoate + H(+) = 4-(beta-D-ribofuranosyl)phenol 5'-phosphate + CO2 + diphosphate. The enzyme catalyses 4-aminobenzoate + 5-phospho-alpha-D-ribose 1-diphosphate + H(+) = 4-(beta-D-ribofuranosyl)aminobenzene 5'-phosphate + CO2 + diphosphate. It functions in the pathway cofactor biosynthesis; 5,6,7,8-tetrahydromethanopterin biosynthesis. Catalyzes the condensation of 4-hydroxybenzoate (HB) with 5-phospho-alpha-D-ribose 1-diphosphate (PRPP) to produce beta-ribofuranosylphenol 5'-phosphate (beta-RFH-P). Also catalyzes the condensation of 4-aminobenzoate (pABA) with PRPP to produce beta-ribofuranosylaminobenzene 5'-phosphate (beta-RFA-P). The polypeptide is Beta-ribofuranosylphenol 5'-phosphate synthase (Archaeoglobus fulgidus (strain ATCC 49558 / DSM 4304 / JCM 9628 / NBRC 100126 / VC-16)).